Here is a 275-residue protein sequence, read N- to C-terminus: Pantothenate synthetase (275 aa).

Methionine 26–histidine 33 serves as a coordination point for ATP. Catalysis depends on histidine 33, which acts as the Proton donor. Position 57 (glutamine 57) interacts with (R)-pantoate. Glutamine 57 contributes to the beta-alanine binding site. Glycine 143–aspartate 146 lines the ATP pocket. Glutamine 149 contributes to the (R)-pantoate binding site. ATP-binding positions include alanine 172 and arginine 180 to arginine 183.

Belongs to the pantothenate synthetase family. Homodimer.

It is found in the cytoplasm. It catalyses the reaction (R)-pantoate + beta-alanine + ATP = (R)-pantothenate + AMP + diphosphate + H(+). It functions in the pathway cofactor biosynthesis; (R)-pantothenate biosynthesis; (R)-pantothenate from (R)-pantoate and beta-alanine: step 1/1. In terms of biological role, catalyzes the condensation of pantoate with beta-alanine in an ATP-dependent reaction via a pantoyl-adenylate intermediate. In Gluconobacter oxydans (strain 621H) (Gluconobacter suboxydans), this protein is Pantothenate synthetase.